The following is a 512-amino-acid chain: Glycerol kinase (512 aa).

An ADP-binding site is contributed by T14. ATP is bound by residues T14, T15, and S16. T14 serves as a coordination point for sn-glycerol 3-phosphate. Position 18 (R18) interacts with ADP. Sn-glycerol 3-phosphate is bound by residues R83, E84, Y135, and D244. R83, E84, Y135, D244, and Q245 together coordinate glycerol. ADP contacts are provided by T266, G309, G410, and N414. ATP contacts are provided by T266, G309, and G410.

Belongs to the FGGY kinase family.

It catalyses the reaction glycerol + ATP = sn-glycerol 3-phosphate + ADP + H(+). It functions in the pathway polyol metabolism; glycerol degradation via glycerol kinase pathway; sn-glycerol 3-phosphate from glycerol: step 1/1. With respect to regulation, inhibited by fructose 1,6-bisphosphate (FBP). Functionally, key enzyme in the regulation of glycerol uptake and metabolism. Catalyzes the phosphorylation of glycerol to yield sn-glycerol 3-phosphate. This is Glycerol kinase from Gluconobacter oxydans (strain 621H) (Gluconobacter suboxydans).